Reading from the N-terminus, the 456-residue chain is Histidine--tRNA ligase (456 aa).

This sequence belongs to the class-II aminoacyl-tRNA synthetase family. Homodimer.

The protein localises to the cytoplasm. It catalyses the reaction tRNA(His) + L-histidine + ATP = L-histidyl-tRNA(His) + AMP + diphosphate + H(+). The polypeptide is Histidine--tRNA ligase (Borreliella afzelii (strain PKo) (Borrelia afzelii)).